Consider the following 307-residue polypeptide: D-alanine--D-alanine ligase (307 aa).

The ATP-grasp domain occupies 101–301 (KTVMRAAGVS…FGELVRWMVE (201 aa)). 127-182 (PLTPPYVVKPIAEGSSMGVIIVREERSHPPQILASDEWVYGEEVLAETYIAGRELT) is a binding site for ATP. Positions 251, 268, and 270 each coordinate Mg(2+).

The protein belongs to the D-alanine--D-alanine ligase family. It depends on Mg(2+) as a cofactor. The cofactor is Mn(2+).

It localises to the cytoplasm. The enzyme catalyses 2 D-alanine + ATP = D-alanyl-D-alanine + ADP + phosphate + H(+). It functions in the pathway cell wall biogenesis; peptidoglycan biosynthesis. Cell wall formation. The protein is D-alanine--D-alanine ligase of Methylorubrum populi (strain ATCC BAA-705 / NCIMB 13946 / BJ001) (Methylobacterium populi).